The sequence spans 83 residues: Small ribosomal subunit protein eS21 (83 aa).

The residue at position 1 (methionine 1) is an N-acetylmethionine. A Glycyl lysine isopeptide (Lys-Gly) (interchain with G-Cter in SUMO2) cross-link involves residue lysine 41. The residue at position 81 (lysine 81) is an N6-acetyllysine.

Belongs to the eukaryotic ribosomal protein eS21 family. As to quaternary structure, component of the 40S small ribosomal subunit.

The protein localises to the cytoplasm. The protein resides in the cytosol. Its subcellular location is the rough endoplasmic reticulum. Its function is as follows. Component of the small ribosomal subunit. The ribosome is a large ribonucleoprotein complex responsible for the synthesis of proteins in the cell. In Sus scrofa (Pig), this protein is Small ribosomal subunit protein eS21 (RPS21).